We begin with the raw amino-acid sequence, 464 residues long: Probable glycosyltransferase Saci_1499 (464 aa).

Helical transmembrane passes span 6 to 26, 300 to 320, 337 to 357, 373 to 393, 416 to 436, and 439 to 459; these read IFLN…QIIL, LIIY…STLL, ALLF…SLAL, LTAF…KGLL, IIAI…LYIY, and YYVT…TMLL.

This sequence belongs to the glycosyltransferase 2 family.

The protein resides in the cell membrane. Functionally, probably part of a 4-gene DNA damage response locus in which the upstream ups system, in combination with this downstream locus, functions in homologous recombination to rescue Sulfolobales from DNA-damaging threats. The sequence is that of Probable glycosyltransferase Saci_1499 from Sulfolobus acidocaldarius (strain ATCC 33909 / DSM 639 / JCM 8929 / NBRC 15157 / NCIMB 11770).